Consider the following 157-residue polypeptide: 2-C-methyl-D-erythritol 2,4-cyclodiphosphate synthase (157 aa).

Asp-8, His-10, and His-42 together coordinate a divalent metal cation. 8–10 (DVH) is a 4-CDP-2-C-methyl-D-erythritol 2-phosphate binding site. 4-CDP-2-C-methyl-D-erythritol 2-phosphate contacts are provided by residues 56–58 (DIG), 132–135 (STSE), Phe-139, and Arg-142.

It belongs to the IspF family. In terms of assembly, homotrimer. A divalent metal cation serves as cofactor.

The enzyme catalyses 4-CDP-2-C-methyl-D-erythritol 2-phosphate = 2-C-methyl-D-erythritol 2,4-cyclic diphosphate + CMP. The protein operates within isoprenoid biosynthesis; isopentenyl diphosphate biosynthesis via DXP pathway; isopentenyl diphosphate from 1-deoxy-D-xylulose 5-phosphate: step 4/6. Functionally, involved in the biosynthesis of isopentenyl diphosphate (IPP) and dimethylallyl diphosphate (DMAPP), two major building blocks of isoprenoid compounds. Catalyzes the conversion of 4-diphosphocytidyl-2-C-methyl-D-erythritol 2-phosphate (CDP-ME2P) to 2-C-methyl-D-erythritol 2,4-cyclodiphosphate (ME-CPP) with a corresponding release of cytidine 5-monophosphate (CMP). The protein is 2-C-methyl-D-erythritol 2,4-cyclodiphosphate synthase of Dehalococcoides mccartyi (strain CBDB1).